Here is a 970-residue protein sequence, read N- to C-terminus: Sodium/calcium exchanger 1 (970 aa).

Positions 1–32 (MLQFSLSPTLSMGFHVIAMVALLFSHVDHISA) are cleaved as a signal peptide. Residues 33–71 (ETEMEGEGNETGECTGSYYCKKGVILPIWEPQDPSFGDK) are Extracellular-facing. Asparagine 41 is a glycosylation site (N-linked (GlcNAc...) asparagine). Residues 72–92 (IARATVYFVAMVYMFLGVSII) form a helical membrane-spanning segment. The Cytoplasmic segment spans residues 93-133 (ADRFMSSIEVITSQEKEITIKKPNGETTKTTVRIWNETVSN). A helical membrane pass occupies residues 134 to 154 (LTLMALGSSAPEILLSVIEVC). An Alpha-1 repeat occupies 138–178 (ALGSSAPEILLSVIEVCGHNFTAGDLGPSTIVGSAAFNMFI). At 155 to 167 (GHNFTAGDLGPST) the chain is on the extracellular side. N-linked (GlcNAc...) asparagine glycosylation is present at asparagine 157. A helical transmembrane segment spans residues 168-188 (IVGSAAFNMFIIIALCVYVVP). At 189-201 (DGETRKIKHLRVF) the chain is on the cytoplasmic side. Residues 202–222 (FVTAAWSIFAYTWLYIILSVS) traverse the membrane as a helical segment. Residues 223–228 (SPGVVE) are Extracellular-facing. A helical membrane pass occupies residues 229–249 (VWEGLLTFFFFPICVVFAWVA). Topologically, residues 250 to 797 (DRRLLFYKYV…FVPPTEYWNG (548 aa)) are cytoplasmic. The interval 251–270 (RRLLFYKYVYKRYRAGKQRG) is putative calmodulin-binding region. Phosphoserine occurs at positions 282 and 389. 2 Calx-beta domains span residues 393–493 (VNTE…VHLS) and 524–624 (ATVT…LEIG). Residues glutamate 417, aspartate 453, aspartate 478, aspartate 479, isoleucine 481, glutamate 483, glutamate 486, aspartate 530, aspartate 531, aspartate 532, glutamate 548, aspartate 584, aspartate 610, glutamate 611, glutamate 612, and glutamate 715 each contribute to the Ca(2+) site. Residues 798-818 (WACFIVSILMIGLLTAFIGDL) form a helical membrane-spanning segment. The Extracellular segment spans residues 819–821 (ASH). A helical transmembrane segment spans residues 822 to 842 (FACTIALKDSVTAVVFVALGT). Residues 839–875 (ALGTSVPDTFASKVAATQDQYADASIGNVTGSNAVNV) form an Alpha-2 repeat. Topologically, residues 843–871 (SVPDTFASKVAATQDQYADASIGNVTGSN) are cytoplasmic. The helical transmembrane segment at 872–892 (AVNVFLGIGVAWSIAAIYHAA) threads the bilayer. The Extracellular portion of the chain corresponds to 893 to 903 (NGEQFKVSPGT). The helical transmembrane segment at 904–924 (LAFSVTLFTIFAFINVGVLLY) threads the bilayer. Topologically, residues 925–941 (RRRPEIGGELGGPRTAK) are cytoplasmic. A helical membrane pass occupies residues 942–962 (LLTSCLFVLLWLLYIFFSSLE). Topologically, residues 963 to 970 (AYCHIKGF) are extracellular.

It belongs to the Ca(2+):cation antiporter (CaCA) (TC 2.A.19) family. SLC8 subfamily.

Its subcellular location is the cell membrane. It catalyses the reaction Ca(2+)(in) + 3 Na(+)(out) = Ca(2+)(out) + 3 Na(+)(in). Its activity is regulated as follows. Activated by micromolar levels of Ca(2+). Functionally, mediates the exchange of one Ca(2+) ion against three to four Na(+) ions across the cell membrane, and thereby contributes to the regulation of cytoplasmic Ca(2+) levels and Ca(2+)-dependent cellular processes. Contributes to Ca(2+) transport during excitation-contraction coupling in muscle. In a first phase, voltage-gated channels mediate the rapid increase of cytoplasmic Ca(2+) levels due to release of Ca(2+) stores from the endoplasmic reticulum. SLC8A1 mediates the export of Ca(2+) from the cell during the next phase, so that cytoplasmic Ca(2+) levels rapidly return to baseline. Required for normal embryonic heart development and the onset of heart contractions. The chain is Sodium/calcium exchanger 1 (SLC8A1) from Bos taurus (Bovine).